The primary structure comprises 303 residues: Uricase (303 aa).

Ala-2 carries the post-translational modification N-acetylalanine. 2 positions are modified to N6-acetyllysine; alternate: Lys-10 and Lys-23. Residues Lys-10 and Lys-23 each carry the N6-succinyllysine; alternate modification. Lys-23 serves as the catalytic Charge relay system. Lys-27 and Lys-36 each carry N6-acetyllysine. Residues Ser-39 and Ser-63 each carry the phosphoserine modification. The active-site Charge relay system is Thr-68. Urate is bound by residues Thr-68 and Asp-69. 3 positions are modified to N6-acetyllysine: Lys-118, Lys-122, and Lys-164. Phe-170 is a binding site for urate. Residues Lys-175 and Lys-185 each carry the N6-acetyllysine modification. Arg-187 serves as a coordination point for urate. Lys-220 is subject to N6-acetyllysine; alternate. The residue at position 220 (Lys-220) is an N6-succinyllysine; alternate. At Ser-231 the chain carries Phosphoserine. Val-234, Gln-235, and Asn-261 together coordinate urate. Catalysis depends on His-263, which acts as the Charge relay system. N6-acetyllysine is present on Lys-277. Tyr-288 bears the Phosphotyrosine mark. Residues 301–303 (SRL) carry the Microbody targeting signal motif.

The protein belongs to the uricase family. Expressed in liver. Not detected in other tissues tested.

Its subcellular location is the peroxisome. It carries out the reaction urate + O2 + H2O = 5-hydroxyisourate + H2O2. It functions in the pathway purine metabolism; urate degradation; (S)-allantoin from urate: step 1/3. With respect to regulation, competitively inhibited by xanthine. Catalyzes the oxidation of uric acid to 5-hydroxyisourate, which is further processed to form (S)-allantoin. This is Uricase (Uox) from Rattus norvegicus (Rat).